The sequence spans 129 residues: Ig kappa chain V-IV region S107B (129 aa).

An N-terminal signal peptide occupies residues 1–22 (MDLQVQIIXFLLISVTVIMSRG). Residues 23 to 45 (ENVLTQSPAIMAASLGQKVTMTC) form a framework-1 region. Residues Cys45 and Cys111 are joined by a disulfide bond. The complementarity-determining-1 stretch occupies residues 46-57 (SASSSVSSSYLH). Positions 58–72 (WYQQKSGASPKPLIH) are framework-2. Residues 73 to 79 (RTSNLAS) are complementarity-determining-2. Residues 80–111 (GVPARFSGSGSGTSYSLTISSVEAEDDATYYC) are framework-3. Positions 112-118 (QQWSGYP) are complementarity-determining-3. The framework-4 stretch occupies residues 119 to 128 (FGSGTKLEIK).

The chain is Ig kappa chain V-IV region S107B from Mus musculus (Mouse).